A 361-amino-acid chain; its full sequence is Hydroxymethylglutaryl-CoA synthase (361 aa).

Residue Glu92 is the Proton donor/acceptor of the active site. Cys124 functions as the Acyl-thioester intermediate in the catalytic mechanism. Cys124, Ser165, Thr214, and His247 together coordinate (3S)-3-hydroxy-3-methylglutaryl-CoA. His247 (proton donor/acceptor) is an active-site residue. Residue Lys252 participates in CoA binding. Residues Lys256, Asn279, and Ser309 each contribute to the (3S)-3-hydroxy-3-methylglutaryl-CoA site.

It belongs to the thiolase-like superfamily. Archaeal HMG-CoA synthase family. Interacts with acetoacetyl-CoA thiolase that catalyzes the precedent step in the pathway and with a DUF35 protein. The acetoacetyl-CoA thiolase/HMG-CoA synthase complex channels the intermediate via a fused CoA-binding site, which allows for efficient coupling of the endergonic thiolase reaction with the exergonic HMGCS reaction.

It catalyses the reaction acetoacetyl-CoA + acetyl-CoA + H2O = (3S)-3-hydroxy-3-methylglutaryl-CoA + CoA + H(+). It functions in the pathway metabolic intermediate biosynthesis; (R)-mevalonate biosynthesis; (R)-mevalonate from acetyl-CoA: step 2/3. In terms of biological role, catalyzes the condensation of acetyl-CoA with acetoacetyl-CoA to form 3-hydroxy-3-methylglutaryl-CoA (HMG-CoA). Functions in the mevalonate (MVA) pathway leading to isopentenyl diphosphate (IPP), a key precursor for the biosynthesis of isoprenoid compounds that are building blocks of archaeal membrane lipids. This is Hydroxymethylglutaryl-CoA synthase from Aeropyrum pernix (strain ATCC 700893 / DSM 11879 / JCM 9820 / NBRC 100138 / K1).